The sequence spans 530 residues: Sulfate adenylyltransferase (530 aa).

Positions 1–178 are N-terminal; that stretch reads MPIPAPHGGK…IQGLDYPTHY (178 aa). Residues 179 to 410 form a catalytic region; sequence DYIPFRKTPT…LRESNPPRSK (232 aa). Residue Gln208 participates in sulfate binding. ATP contacts are provided by residues 208–211 and 304–307; these read QTRN and GRDH. Residues Thr209, Arg210, and Asn211 contribute to the active site. Arg210 provides a ligand contact to sulfate. Ala308 is a binding site for sulfate. Val348 contributes to the ATP binding site. A required for oligomerization; adenylyl-sulfate kinase-like region spans residues 411-530; the sequence is QGFAIVIDSS…LVSQGFYQQS (120 aa).

The protein belongs to the sulfate adenylyltransferase family. Homohexamer. Dimer of trimers.

The protein localises to the cytoplasm. The catalysed reaction is sulfate + ATP + H(+) = adenosine 5'-phosphosulfate + diphosphate. It participates in sulfur metabolism; hydrogen sulfide biosynthesis; sulfite from sulfate: step 1/3. In terms of biological role, catalyzes the first intracellular reaction of sulfate assimilation, forming adenosine-5'-phosphosulfate (APS) from inorganic sulfate and ATP. Plays an important role in sulfate activation as a component of the biosynthesis pathway of sulfur-containing amino acids. The sequence is that of Sulfate adenylyltransferase from Debaryomyces hansenii (strain ATCC 36239 / CBS 767 / BCRC 21394 / JCM 1990 / NBRC 0083 / IGC 2968) (Yeast).